The following is a 314-amino-acid chain: DNA topoisomerase 1B (314 aa).

In terms of domain architecture, Topo IB-type catalytic spans 77 to 314 (VQNRNAKRDR…VDHVKSSTDG (238 aa)). The active-site O-(3'-phospho-DNA)-tyrosine intermediate is Y274.

Belongs to the type IB topoisomerase family.

It catalyses the reaction ATP-independent breakage of single-stranded DNA, followed by passage and rejoining.. In terms of biological role, releases the supercoiling and torsional tension of DNA introduced during the DNA replication and transcription by transiently cleaving and rejoining one strand of the DNA duplex. Introduces a single-strand break via transesterification at the specific target site 5'-[CT]CCTTp site in duplex DNA. The scissile phosphodiester is attacked by the catalytic tyrosine of the enzyme, resulting in the formation of a DNA-(3'-phosphotyrosyl)-enzyme intermediate and the expulsion of a 5'-OH DNA strand. The free DNA strand then undergoes passage around the unbroken strand thus removing DNA supercoils. Finally, in the religation step, the DNA 5'-OH attacks the covalent intermediate to expel the active-site tyrosine and restore the DNA phosphodiester backbone. The protein is DNA topoisomerase 1B (TOP1) of Vaccinia virus (strain Ankara) (VACV).